The chain runs to 389 residues: Flap endonuclease 1 (389 aa).

Residues 1–105 (MGIKGLTALM…GELAKRKDKR (105 aa)) form an N-domain region. Aspartate 34 serves as a coordination point for Mg(2+). Arginine 71 contacts DNA. Residues aspartate 87, glutamate 159, glutamate 161, aspartate 180, and aspartate 182 each contribute to the Mg(2+) site. Residues 123-254 (EVEKLSKRTV…KTALKLIKEH (132 aa)) form an I-domain region. Glutamate 159 is a DNA binding site. The DNA site is built by glycine 232 and aspartate 234. Residue aspartate 234 coordinates Mg(2+). The interaction with PCNA stretch occupies residues 338-346 (SQNRLESFF). Residues 356–389 (IGKRKVEEKKGKNGKAGLANKKSKGVSGFRRSKN) form a disordered region.

Belongs to the XPG/RAD2 endonuclease family. FEN1 subfamily. Interacts with PCNA. Three molecules of FEN1 bind to one PCNA trimer with each molecule binding to one PCNA monomer. PCNA stimulates the nuclease activity without altering cleavage specificity. Mg(2+) serves as cofactor. Phosphorylated. Phosphorylation upon DNA damage induces relocalization to the nuclear plasma.

Its subcellular location is the nucleus. The protein localises to the nucleolus. It is found in the nucleoplasm. The protein resides in the mitochondrion. Structure-specific nuclease with 5'-flap endonuclease and 5'-3' exonuclease activities involved in DNA replication and repair. During DNA replication, cleaves the 5'-overhanging flap structure that is generated by displacement synthesis when DNA polymerase encounters the 5'-end of a downstream Okazaki fragment. It enters the flap from the 5'-end and then tracks to cleave the flap base, leaving a nick for ligation. Also involved in the long patch base excision repair (LP-BER) pathway, by cleaving within the apurinic/apyrimidinic (AP) site-terminated flap. Acts as a genome stabilization factor that prevents flaps from equilibrating into structures that lead to duplications and deletions. Also possesses 5'-3' exonuclease activity on nicked or gapped double-stranded DNA, and exhibits RNase H activity. Also involved in replication and repair of rDNA and in repairing mitochondrial DNA. The sequence is that of Flap endonuclease 1 from Ostreococcus lucimarinus (strain CCE9901).